Here is a 438-residue protein sequence, read N- to C-terminus: Enolase (438 aa).

Substrate contacts are provided by His-159 and Glu-168. Glu-211 functions as the Proton donor in the catalytic mechanism. Mg(2+) is bound by residues Asp-246, Glu-297, and Asp-322. Substrate is bound by residues Glu-297 and Asp-322. The active-site Proton acceptor is the Lys-347. Residues 374 to 377 (SHRS) and Lys-398 contribute to the substrate site.

Belongs to the enolase family. As to quaternary structure, homodimer. Mg(2+) serves as cofactor.

It localises to the cytoplasm. It carries out the reaction (2R)-2-phosphoglycerate = phosphoenolpyruvate + H2O. The protein operates within carbohydrate degradation; glycolysis; pyruvate from D-glyceraldehyde 3-phosphate: step 4/5. This Alternaria alternata (Alternaria rot fungus) protein is Enolase (ENO).